The following is a 169-amino-acid chain: uncharacterized protein (169 aa).

2 helical membrane-spanning segments follow: residues 62 to 84 and 94 to 116; these read RWGFFAGGLIFLVSSAIMYLLGL and ALMLFVLPTAFLFVSLLLLYWWF.

The protein resides in the cell membrane. This is an uncharacterized protein from Archaeoglobus fulgidus (strain ATCC 49558 / DSM 4304 / JCM 9628 / NBRC 100126 / VC-16).